The sequence spans 434 residues: F-box/LRR-repeat protein 21 (434 aa).

Residues 39–85 (LLDWGTLPHHVILQIFQYLPLIDRARASSVCRRWNEVFHIPDLWRKF) form the F-box domain. 6 LRR repeats span residues 187-213 (DTPV…KMSS), 214-239 (CPHV…ALNY), 242-265 (LSDE…RIDV), 322-347 (GRSV…VVCA), 349-374 (GLLP…GLSE), and 375-400 (CEVS…SIME).

As to quaternary structure, part of the SCF (SKP1-CUL1-F-box) E3 ubiquitin-protein ligase complex SCF(FBXL21) composed of CUL1, SKP1, RBX1 and FBXL21. Interacts with CRY1 and CRY2. In terms of tissue distribution, expressed in the hypothalamus, especially in the suprachiasmatic nucleus (SCN). Expression is driven by the core-clock. There is a pronounced diurnal and circadian expression rhythms rising rapidly at the start of the day and declining at the onset of the night.

The protein resides in the cytoplasm. It localises to the cytosol. It is found in the nucleus. It participates in protein modification; protein ubiquitination. Its function is as follows. Substrate-recognition component of the SCF(FBXL21) E3 ubiquitin ligase complex involved in circadian rhythm function. Plays a key role in the maintenance of both the speed and the robustness of the circadian clock oscillation. The SCF(FBXL21) complex mainly acts in the cytosol and mediates ubiquitination of CRY proteins (CRY1 and CRY2), leading to CRY proteins stabilization. The SCF(FBXL21) complex counteracts the activity of the SCF(FBXL3) complex and protects CRY proteins from degradation. Involved in the hypothalamic suprachiasmatic nucleus (SCN) clock regulating temporal organization of the daily activities. The sequence is that of F-box/LRR-repeat protein 21 (Fbxl21) from Mus musculus (Mouse).